We begin with the raw amino-acid sequence, 281 residues long: Acetyl-coenzyme A carboxylase carboxyl transferase subunit beta (281 aa).

In terms of domain architecture, CoA carboxyltransferase N-terminal spans 24-281 (GLWYKSPKGK…TKLLTMLANN (258 aa)).

It belongs to the AccD/PCCB family. In terms of assembly, acetyl-CoA carboxylase is a heterohexamer composed of biotin carboxyl carrier protein (AccB), biotin carboxylase (AccC) and two subunits each of ACCase subunit alpha (AccA) and ACCase subunit beta (AccD).

It is found in the cytoplasm. It catalyses the reaction N(6)-carboxybiotinyl-L-lysyl-[protein] + acetyl-CoA = N(6)-biotinyl-L-lysyl-[protein] + malonyl-CoA. Its pathway is lipid metabolism; malonyl-CoA biosynthesis; malonyl-CoA from acetyl-CoA: step 1/1. In terms of biological role, component of the acetyl coenzyme A carboxylase (ACC) complex. Biotin carboxylase (BC) catalyzes the carboxylation of biotin on its carrier protein (BCCP) and then the CO(2) group is transferred by the transcarboxylase to acetyl-CoA to form malonyl-CoA. This Amoebophilus asiaticus (strain 5a2) protein is Acetyl-coenzyme A carboxylase carboxyl transferase subunit beta.